The chain runs to 46 residues: Large ribosomal subunit protein bL36 (46 aa).

This sequence belongs to the bacterial ribosomal protein bL36 family.

The polypeptide is Large ribosomal subunit protein bL36 (Serratia proteamaculans (strain 568)).